We begin with the raw amino-acid sequence, 309 residues long: WD repeat domain phosphoinositide-interacting protein 4 (309 aa).

The WD 1 repeat unit spans residues Gln4–His42. Positions Leu180–Gly183 match the L/FRRG motif motif. One copy of the WD 2 repeat lies at Thr184–Arg223.

It belongs to the WD repeat PROPPIN family. Interacts with WIPI1. Interacts with WIPI2. Interacts with ATG2A and ATG2B. Interacts with ULK1. May interact with the PRKAA1, PRKAA2, PRKAB1 and PRKAG1 subunits of the AMPK kinase. May interact with NUDC.

The protein localises to the preautophagosomal structure. It is found in the cytoplasm. Component of the autophagy machinery that controls the major intracellular degradation process by which cytoplasmic materials are packaged into autophagosomes and delivered to lysosomes for degradation. Binds phosphatidylinositol 3-phosphate (PtdIns3P). Activated by the STK11/AMPK signaling pathway upon starvation, WDR45 is involved in autophagosome assembly downstream of WIPI2, regulating the size of forming autophagosomes. Together with WIPI1, promotes ATG2 (ATG2A or ATG2B)-mediated lipid transfer by enhancing ATG2-association with phosphatidylinositol 3-monophosphate (PI3P)-containing membranes. Probably recruited to membranes through its PtdIns3P activity. The polypeptide is WD repeat domain phosphoinositide-interacting protein 4 (Wdr45) (Rattus norvegicus (Rat)).